The sequence spans 1234 residues: ATP-dependent helicase/nuclease subunit A (1234 aa).

Positions 2–475 (TQFTTSQQAA…IILAENFRST (474 aa)) constitute a UvrD-like helicase ATP-binding domain. 23–30 (ASAGSGKT) contributes to the ATP binding site. Residues 507–806 (YGALDYGDAH…KLMTIHKSKG (300 aa)) form the UvrD-like helicase C-terminal domain.

This sequence belongs to the helicase family. AddA subfamily. As to quaternary structure, heterodimer of AddA and AddB/RexB. Mg(2+) is required as a cofactor.

It catalyses the reaction Couples ATP hydrolysis with the unwinding of duplex DNA by translocating in the 3'-5' direction.. The catalysed reaction is ATP + H2O = ADP + phosphate + H(+). In terms of biological role, the heterodimer acts as both an ATP-dependent DNA helicase and an ATP-dependent, dual-direction single-stranded exonuclease. Recognizes the chi site generating a DNA molecule suitable for the initiation of homologous recombination. The AddA nuclease domain is required for chi fragment generation; this subunit has the helicase and 3' -&gt; 5' nuclease activities. The sequence is that of ATP-dependent helicase/nuclease subunit A from Lacticaseibacillus casei (strain BL23) (Lactobacillus casei).